Here is a 105-residue protein sequence, read N- to C-terminus: Probable guanidinium efflux system subunit GdnD (105 aa).

4 helical membrane passes run 1-21, 32-52, 59-79, and 85-105; these read MLHW…VALM, WVLL…YAME, AYAV…ILFY, and AKRI…KILS.

It belongs to the drug/metabolite transporter (DMT) superfamily. Small multidrug resistance (SMR) (TC 2.A.7.1) family. YkkC/YkkD subfamily. The efflux pump is composed of GdnC and GdnD.

The protein resides in the cell membrane. Functionally, probably involved in guanidinium transport. In vitro, confers resistance to a broad range of toxic compounds such as cationic dyes, neutral and anionic antimicrobials. The chain is Probable guanidinium efflux system subunit GdnD from Bacillus subtilis (strain 168).